Consider the following 423-residue polypeptide: Phytoene synthase, chloroplastic (423 aa).

The transit peptide at 1–136 (MVVAILRVVS…DAYDRCGEVC (136 aa)) directs the protein to the chloroplast.

This sequence belongs to the phytoene/squalene synthase family. As to quaternary structure, monomer.

It is found in the plastid. Its subcellular location is the chloroplast. The enzyme catalyses 2 (2E,6E,10E)-geranylgeranyl diphosphate = 15-cis-phytoene + 2 diphosphate. It functions in the pathway carotenoid biosynthesis; phytoene biosynthesis; all-trans-phytoene from geranylgeranyl diphosphate: step 1/1. Catalyzes the reaction from prephytoene diphosphate to phytoene. The chain is Phytoene synthase, chloroplastic (PSY) from Narcissus pseudonarcissus (Daffodil).